A 120-amino-acid chain; its full sequence is NAD(P)H-quinone oxidoreductase subunit 3, chloroplastic (120 aa).

3 helical membrane-spanning segments follow: residues 9–29 (IFWT…SISG), 64–84 (MFAL…PWAM), and 88–108 (VLGV…VVGL).

It belongs to the complex I subunit 3 family. In terms of assembly, NDH is composed of at least 16 different subunits, 5 of which are encoded in the nucleus.

It is found in the plastid. Its subcellular location is the chloroplast thylakoid membrane. The catalysed reaction is a plastoquinone + NADH + (n+1) H(+)(in) = a plastoquinol + NAD(+) + n H(+)(out). It catalyses the reaction a plastoquinone + NADPH + (n+1) H(+)(in) = a plastoquinol + NADP(+) + n H(+)(out). Its function is as follows. NDH shuttles electrons from NAD(P)H:plastoquinone, via FMN and iron-sulfur (Fe-S) centers, to quinones in the photosynthetic chain and possibly in a chloroplast respiratory chain. The immediate electron acceptor for the enzyme in this species is believed to be plastoquinone. Couples the redox reaction to proton translocation, and thus conserves the redox energy in a proton gradient. The chain is NAD(P)H-quinone oxidoreductase subunit 3, chloroplastic from Hordeum vulgare (Barley).